The sequence spans 87 residues: Small ribosomal subunit protein bS20 (87 aa).

This sequence belongs to the bacterial ribosomal protein bS20 family.

Its function is as follows. Binds directly to 16S ribosomal RNA. The sequence is that of Small ribosomal subunit protein bS20 from Roseobacter denitrificans (strain ATCC 33942 / OCh 114) (Erythrobacter sp. (strain OCh 114)).